Reading from the N-terminus, the 650-residue chain is 1-deoxy-D-xylulose-5-phosphate synthase (650 aa).

Residues H73 and 114–116 (SHA) each bind thiamine diphosphate. Mg(2+) is bound at residue D145. Residues 146–147 (GA), N174, Y285, and E367 contribute to the thiamine diphosphate site. Mg(2+) is bound at residue N174. A disordered region spans residues 631–650 (MGDEVGADESNQTPAGGGQA).

The protein belongs to the transketolase family. DXPS subfamily. In terms of assembly, homodimer. Mg(2+) is required as a cofactor. Thiamine diphosphate serves as cofactor.

The enzyme catalyses D-glyceraldehyde 3-phosphate + pyruvate + H(+) = 1-deoxy-D-xylulose 5-phosphate + CO2. Its pathway is metabolic intermediate biosynthesis; 1-deoxy-D-xylulose 5-phosphate biosynthesis; 1-deoxy-D-xylulose 5-phosphate from D-glyceraldehyde 3-phosphate and pyruvate: step 1/1. In terms of biological role, catalyzes the acyloin condensation reaction between C atoms 2 and 3 of pyruvate and glyceraldehyde 3-phosphate to yield 1-deoxy-D-xylulose-5-phosphate (DXP). The polypeptide is 1-deoxy-D-xylulose-5-phosphate synthase (Parafrankia sp. (strain EAN1pec)).